We begin with the raw amino-acid sequence, 228 residues long: NAD(P)H-hydrate epimerase (228 aa).

Residues 9 to 215 form the YjeF N-terminal domain; the sequence is AISIDEELFN…RLEEKYSLEL (207 aa). 58-62 lines the (6S)-NADPHX pocket; the sequence is NNGGD. Residues Asn59 and Asp123 each contribute to the K(+) site. (6S)-NADPHX is bound by residues 127–133 and Asp156; that span reads GFSFKPP. Ser159 lines the K(+) pocket.

It belongs to the NnrE/AIBP family. It depends on K(+) as a cofactor.

The enzyme catalyses (6R)-NADHX = (6S)-NADHX. It catalyses the reaction (6R)-NADPHX = (6S)-NADPHX. Catalyzes the epimerization of the S- and R-forms of NAD(P)HX, a damaged form of NAD(P)H that is a result of enzymatic or heat-dependent hydration. This is a prerequisite for the S-specific NAD(P)H-hydrate dehydratase to allow the repair of both epimers of NAD(P)HX. This is NAD(P)H-hydrate epimerase from Anopheles darlingi (Mosquito).